We begin with the raw amino-acid sequence, 220 residues long: Large ribosomal subunit protein uL3 (220 aa).

A disordered region spans residues 127–155 (FQGAIKRHGQSRGPMSHSSHFHRAPDSVG).

The protein belongs to the universal ribosomal protein uL3 family. As to quaternary structure, part of the 50S ribosomal subunit. Forms a cluster with proteins L14 and L19.

Its function is as follows. One of the primary rRNA binding proteins, it binds directly near the 3'-end of the 23S rRNA, where it nucleates assembly of the 50S subunit. This chain is Large ribosomal subunit protein uL3, found in Staphylococcus aureus (strain JH9).